Reading from the N-terminus, the 432-residue chain is Proline--tRNA ligase (432 aa).

It belongs to the class-II aminoacyl-tRNA synthetase family. ProS type 2 subfamily. Homodimer.

The protein localises to the cytoplasm. The enzyme catalyses tRNA(Pro) + L-proline + ATP = L-prolyl-tRNA(Pro) + AMP + diphosphate. Functionally, catalyzes the attachment of proline to tRNA(Pro) in a two-step reaction: proline is first activated by ATP to form Pro-AMP and then transferred to the acceptor end of tRNA(Pro). The chain is Proline--tRNA ligase from Rickettsia prowazekii (strain Madrid E).